The chain runs to 265 residues: AT-hook motif nuclear-localized protein 18 (265 aa).

The tract at residues 1–75 is disordered; it reads MDEVSRSHTP…AGSKNKPKAP (75 aa). Residues 19–30 are compositionally biased toward basic residues; sequence HYHHQNAGRQKR. Positions 59–71 form a DNA-binding region, a.T hook; that stretch reads RRPRGRPAGSKNK. Residues 83–217 form the PPC domain; sequence ANAFRCHVME…EEEETEREID (135 aa).

The protein resides in the nucleus. Transcription factor that specifically binds AT-rich DNA sequences related to the nuclear matrix attachment regions (MARs). Acts redundantly with AHL22, AHL27 and AHL29 in the regulation of flowering and regulation of the hypocotyl elongation. This chain is AT-hook motif nuclear-localized protein 18, found in Arabidopsis thaliana (Mouse-ear cress).